We begin with the raw amino-acid sequence, 845 residues long: Taste receptor type 1 member 3 (845 aa).

Positions 1–18 (MAGLMLLSLMALLGLGAG) are cleaved as a signal peptide. The Extracellular segment spans residues 19-568 (APLCLSRQLR…FLAWGQPAVL (550 aa)). N-linked (GlcNAc...) asparagine glycans are attached at residues N128 and N262. Residues 569-589 (VLLILLALALGLVLVALGLFI) traverse the membrane as a helical segment. The Cytoplasmic segment spans residues 590–601 (RHRDSPLVQASG). A helical membrane pass occupies residues 602 to 622 (GPRACFGLACLGLVCLSVLLF). Residues 623-637 (PGQPGPASCLAQQPL) are Extracellular-facing. A helical membrane pass occupies residues 638–658 (LHLPLTGCLSTLFLQAAQIFV). Over 659–680 (GSELPSSWADQLRRCLQGPWAW) the chain is Cytoplasmic. The helical transmembrane segment at 681 to 701 (LLVLLALLAEAALCAWYLVAF) threads the bilayer. Topologically, residues 702-727 (PPEVVTDWWVLPTQVLVHCRMRSWIS) are extracellular. The chain crosses the membrane as a helical span at residues 728–748 (FGLLHAINAMLAFLCFLGTFL). At 749-760 (VQSRPGRYNGAR) the chain is on the cytoplasmic side. The chain crosses the membrane as a helical span at residues 761 to 781 (GLTFAMLAYFITWISFVPLFA). Residues 782–789 (NVHVAYQP) are Extracellular-facing. A helical transmembrane segment spans residues 790–810 (TVQMAAILLCALGILATFHLP). Residues 811-845 (KCYLLLQQLELNNPEFFLGDDARGQGSSGSGGKET) lie on the Cytoplasmic side of the membrane.

It belongs to the G-protein coupled receptor 3 family. TAS1R subfamily. As to quaternary structure, forms homodimers or heterodimers with TAS1R1 and TAS1R2.

The protein resides in the cell membrane. Functionally, putative taste receptor. TAS1R1/TAS1R3 responds to the umami taste stimulus (the taste of monosodium glutamate). TAS1R2/TAS1R3 recognizes diverse natural and synthetic sweeteners. TAS1R3 is essential for the recognition and response to the disaccharide trehalose. Sequence differences within and between species can significantly influence the selectivity and specificity of taste responses. This is Taste receptor type 1 member 3 (TAS1R3) from Canis lupus familiaris (Dog).